Consider the following 461-residue polypeptide: Cysteine--tRNA ligase (461 aa).

Residue Cys-29 coordinates Zn(2+). Residues 31–41 (MTVYDLCHLGH) carry the 'HIGH' region motif. Zn(2+) contacts are provided by Cys-213, His-238, and Glu-242. A 'KMSKS' region motif is present at residues 270–274 (KMSKS). ATP is bound at residue Lys-273.

The protein belongs to the class-I aminoacyl-tRNA synthetase family. In terms of assembly, monomer. Requires Zn(2+) as cofactor.

It localises to the cytoplasm. It carries out the reaction tRNA(Cys) + L-cysteine + ATP = L-cysteinyl-tRNA(Cys) + AMP + diphosphate. This is Cysteine--tRNA ligase from Delftia acidovorans (strain DSM 14801 / SPH-1).